A 2017-amino-acid chain; its full sequence is Rootletin (2017 aa).

Coiled-coil stretches lie at residues 70–262 and 318–444; these read ATEM…KVTN and ERDL…LETE. Positions 464–483 are enriched in polar residues; it reads SESGVQLSGSERTADASNGS. The segment at 464–518 is disordered; the sequence is SESGVQLSGSERTADASNGSLRGLSGQRTPSPPRRSSPGRGRSPRRGPSPACSDS. The span at 499 to 513 shows a compositional bias: low complexity; it reads SSPGRGRSPRRGPSP. 2 coiled-coil regions span residues 546–1058 and 1091–1438; these read QDLL…LAES and EMER…GLRS. Disordered stretches follow at residues 1184–1226 and 1443–1575; these read LRES…RSAV and GLGL…GRLS. 7 positions are modified to phosphoserine: Ser-1460, Ser-1470, Ser-1476, Ser-1483, Ser-1486, Ser-1490, and Ser-1496. The stretch at 1505–1704 forms a coiled coil; sequence EAVRGALREF…DSEVKAGTLQ (200 aa). Basic and acidic residues predominate over residues 1510–1529; that stretch reads ALREFLQELRSAQRERDELR. Ser-1575 and Ser-1660 each carry phosphoserine. The disordered stretch occupies residues 1962 to 2017; sequence RSAQAQTERTLEARERAHRQRVRGLEEQVSTLKGQLQQELRRSSAPFSPPSGPPEK. Over residues 1989–1999 the composition is skewed to polar residues; sequence QVSTLKGQLQQ. The segment covering 2008–2017 has biased composition (pro residues); that stretch reads FSPPSGPPEK.

The protein belongs to the rootletin family. As to quaternary structure, homomer. Interacts with KLC3, NEK2 and the N-terminus of CEP250. Interacts with CEP44. Interacts with CCDC102B (via N-terminus). Post-translationally, phosphorylated by NEK2 which may regulate its association with centrosomes.

The protein localises to the cytoplasm. The protein resides in the cytoskeleton. It is found in the microtubule organizing center. Its subcellular location is the centrosome. It localises to the centriole. The protein localises to the cilium basal body. Functionally, major structural component of the ciliary rootlet, a cytoskeletal-like structure in ciliated cells which originates from the basal body at the proximal end of a cilium and extends proximally toward the cell nucleus. Furthermore, is required for the correct positioning of the cilium basal body relative to the cell nucleus, to allow for ciliogenesis. Contributes to centrosome cohesion before mitosis. This chain is Rootletin, found in Homo sapiens (Human).